Here is a 298-residue protein sequence, read N- to C-terminus: tRNA-cytidine(32) 2-sulfurtransferase (298 aa).

A disordered region spans residues 1-26; it reads MTAVISLPDPPQRASRGPRVAGPGQD. Residues 57-62 carry the PP-loop motif motif; the sequence is SGGKDS. Positions 132, 135, and 223 each coordinate [4Fe-4S] cluster.

The protein belongs to the TtcA family. As to quaternary structure, homodimer. Mg(2+) is required as a cofactor. [4Fe-4S] cluster serves as cofactor.

It is found in the cytoplasm. The enzyme catalyses cytidine(32) in tRNA + S-sulfanyl-L-cysteinyl-[cysteine desulfurase] + AH2 + ATP = 2-thiocytidine(32) in tRNA + L-cysteinyl-[cysteine desulfurase] + A + AMP + diphosphate + H(+). It functions in the pathway tRNA modification. Functionally, catalyzes the ATP-dependent 2-thiolation of cytidine in position 32 of tRNA, to form 2-thiocytidine (s(2)C32). The sulfur atoms are provided by the cysteine/cysteine desulfurase (IscS) system. This is tRNA-cytidine(32) 2-sulfurtransferase from Stenotrophomonas maltophilia (strain R551-3).